The sequence spans 785 residues: Putative endonuclease MutS2 (785 aa).

335 to 342 (GPNTGGKT) serves as a coordination point for ATP. A coiled-coil region spans residues 513–586 (TAEHNEVDTM…AEKVKAAMKE (74 aa)). Positions 636-785 (KRDFKPGDEV…GSGVTVVELK (150 aa)) are partially complements a deletion for mitomycin C (MMC) resistance and for chromosomal DNA transformation. A KOW region region spans residues 641-681 (PGDEVKVLTFGQKGTLLEKTGGNEWNVQIGILKMKVKEKDL). The 76-residue stretch at 710–785 (LDLRGERYEN…GSGVTVVELK (76 aa)) folds into the Smr domain.

Belongs to the DNA mismatch repair MutS family. MutS2 subfamily. As to quaternary structure, binds to ribosomes as a homodimer. Binds to stalled/collided disomes, association is greater in (ribosome-targeted) antibiotic-treated cells (with increased stalling at specific mRNA sites). The clamp domain of one monomer binds the A-site finger, the 23S rRNA of the central protuberance and ribosomal protein uL5 of the leading (stalled) ribosome, while the other monomer binds in a gap between the ribosomal central protuberance and the L1 stalk of the leading ribosome.

The protein resides in the cytoplasm. Its function is as follows. Acts as a ribosome collision sensor splitting the ribosome into its 2 subunits. Detects stalled/collided disomes (pairs of ribosomes where the leading ribosome is stalled and a second ribosome has collided with it) which it binds and splits, by an ATP-hydrolysis driven conformational change. Does not seem to have endoribonuclease activity (in the context of ribosome stalling). Acts upstream of the ribosome quality control system (RQC), a ribosome-associated complex that mediates the extraction of incompletely synthesized nascent chains from stalled ribosomes and their subsequent degradation, probably generates substrates for RQC. In terms of biological role, does not seem to be involved in mismatch repair or in the prevention of interspecific recombination during DNA transformation. Might be involved in homologous recombination. Putative endonuclease that may be involved in the suppression of homologous recombination and may therefore have a key role in the control of bacterial genetic diversity. The sequence is that of Putative endonuclease MutS2 from Bacillus subtilis (strain 168).